Consider the following 150-residue polypeptide: Oleosin Ara h 10.0102 (150 aa).

Helical transmembrane passes span 39-59 (VIAV…AGLA) and 73-93 (LFIL…LSVA).

It belongs to the oleosin family. In terms of tissue distribution, expressed in seeds (at protein level).

The protein resides in the lipid droplet. It localises to the membrane. Its function is as follows. May have a structural role to stabilize the lipid body during desiccation of the seed by preventing coalescence of the oil. Probably interacts with both lipid and phospholipid moieties of lipid bodies. May also provide recognition signals for specific lipase anchorage in lipolysis during seedling growth. The polypeptide is Oleosin Ara h 10.0102 (Arachis hypogaea (Peanut)).